We begin with the raw amino-acid sequence, 537 residues long: Probable alpha-galactosidase A (537 aa).

The first 23 residues, 1 to 23 (MNQGTKSILLAATLAAIPWQVYG), serve as a signal peptide directing secretion. A disulfide bridge connects residues cysteine 46 and cysteine 78. N-linked (GlcNAc...) asparagine glycosylation is found at asparagine 49, asparagine 87, asparagine 93, and asparagine 123. The cysteines at positions 126 and 156 are disulfide-linked. The active-site Nucleophile is the aspartate 154. Asparagine 203 carries N-linked (GlcNAc...) asparagine glycosylation. Residue aspartate 212 is the Proton donor of the active site. Residues asparagine 355 and asparagine 436 are each glycosylated (N-linked (GlcNAc...) asparagine). Residues 413 to 537 (CSSVVPTGLV…FGLPSGVQLS (125 aa)) form the Ricin B-type lectin domain. Disulfide bonds link cysteine 430-cysteine 444 and cysteine 469-cysteine 482. A glycan (N-linked (GlcNAc...) asparagine) is linked at asparagine 491.

It belongs to the glycosyl hydrolase 27 family.

It localises to the secreted. The catalysed reaction is Hydrolysis of terminal, non-reducing alpha-D-galactose residues in alpha-D-galactosides, including galactose oligosaccharides, galactomannans and galactolipids.. In terms of biological role, hydrolyzes a variety of simple alpha-D-galactoside as well as more complex molecules such as oligosaccharides and polysaccharides. This chain is Probable alpha-galactosidase A (aglA), found in Aspergillus niger (strain ATCC MYA-4892 / CBS 513.88 / FGSC A1513).